Here is a 166-residue protein sequence, read N- to C-terminus: Large ribosomal subunit protein uL10 (166 aa).

The protein belongs to the universal ribosomal protein uL10 family. As to quaternary structure, part of the ribosomal stalk of the 50S ribosomal subunit. The N-terminus interacts with L11 and the large rRNA to form the base of the stalk. The C-terminus forms an elongated spine to which L12 dimers bind in a sequential fashion forming a multimeric L10(L12)X complex.

Functionally, forms part of the ribosomal stalk, playing a central role in the interaction of the ribosome with GTP-bound translation factors. The polypeptide is Large ribosomal subunit protein uL10 (Hydrogenovibrio crunogenus (strain DSM 25203 / XCL-2) (Thiomicrospira crunogena)).